A 305-amino-acid chain; its full sequence is Secreted mono- and diacylglycerol lipase A (305 aa).

A signal peptide spans 1 to 26 (MRLSFFTALSAVASLGYALPGKLQSR). Cystine bridges form between C62/C67 and C129/C132. Residue S171 is the Nucleophile of the active site. D225 acts as the Charge relay system in catalysis. N-linked (GlcNAc...) asparagine glycosylation occurs at N251. H285 functions as the Charge relay system in the catalytic mechanism. Residues 303–305 (KRV) constitute a propeptide, removed in mature form.

This sequence belongs to the AB hydrolase superfamily. Lipase family. Class 3 subfamily. Multiple forms of this lipase are due to the presence of different carbohydrates, which may contribute to the stability of this lipase but not to the enzyme activity.

The protein localises to the secreted. It catalyses the reaction a monoacylglycerol + H2O = glycerol + a fatty acid + H(+). It carries out the reaction a diacylglycerol + H2O = a monoacylglycerol + a fatty acid + H(+). Its activity is regulated as follows. Both Fe(3+) and Hg(2+) inhibit the activity significantly. Its function is as follows. Secreted lipase strictly specific to mono- and diacylglycerol, but not triacylglycerol. Hydrolyzes long-chain monoacylglycerols most efficiently with the highest activities observed on 1- and 3- monopalmitoyl-sn-glycerol or 1-monostearoyl-rac-glycerol. Prefers to attack alpha positions to beta positions of monoacylglycerol, but shows no stereospecificity on mono- and diacylglycerol. In Penicillium camembertii, this protein is Secreted mono- and diacylglycerol lipase A.